The sequence spans 539 residues: Sphingosine-1-phosphate lyase (539 aa).

The first 46 residues, 1-46, serve as a signal peptide directing secretion; that stretch reads MELAMDFALRLRDAANHHLSRYEPLVLLAAPLLALLAARTLHAAAA. Topologically, residues 47 to 54 are lumenal; that stretch reads AVADRGLR. The helical transmembrane segment at 55–75 threads the bilayer; that stretch reads TVLLALAMTAIKLLPGVSAYI. Topologically, residues 76–539 are cytoplasmic; the sequence is NAEKRKVVDQ…LLVEFMDASC (464 aa). An N6-(pyridoxal phosphate)lysine modification is found at K344.

Belongs to the group II decarboxylase family. Sphingosine-1-phosphate lyase subfamily. It depends on pyridoxal 5'-phosphate as a cofactor.

It is found in the endoplasmic reticulum membrane. The catalysed reaction is sphinganine 1-phosphate = hexadecanal + phosphoethanolamine. Its pathway is lipid metabolism; sphingolipid metabolism. Cleaves phosphorylated sphingoid bases (PSBs), such as sphingosine-1-phosphate, into fatty aldehydes and phosphoethanolamine. Elevates stress-induced ceramide production and apoptosis. The chain is Sphingosine-1-phosphate lyase (SPL) from Oryza sativa subsp. japonica (Rice).